A 220-amino-acid chain; its full sequence is Deoxyribose-phosphate aldolase 1 (220 aa).

The Proton donor/acceptor role is filled by aspartate 89. Lysine 151 (schiff-base intermediate with acetaldehyde) is an active-site residue. Lysine 180 (proton donor/acceptor) is an active-site residue.

This sequence belongs to the DeoC/FbaB aldolase family. DeoC type 1 subfamily.

It is found in the cytoplasm. The catalysed reaction is 2-deoxy-D-ribose 5-phosphate = D-glyceraldehyde 3-phosphate + acetaldehyde. Its pathway is carbohydrate degradation; 2-deoxy-D-ribose 1-phosphate degradation; D-glyceraldehyde 3-phosphate and acetaldehyde from 2-deoxy-alpha-D-ribose 1-phosphate: step 2/2. Functionally, catalyzes a reversible aldol reaction between acetaldehyde and D-glyceraldehyde 3-phosphate to generate 2-deoxy-D-ribose 5-phosphate. This is Deoxyribose-phosphate aldolase 1 from Staphylococcus aureus (strain bovine RF122 / ET3-1).